A 766-amino-acid chain; its full sequence is Ubiquitin carboxyl-terminal hydrolase creB (766 aa).

Positions 1-32 are disordered; it reads MGSFLKSFRKDVGSAAPSVGAPPAKKEPQPLP. Low complexity predominate over residues 13–23; that stretch reads GSAAPSVGAPP. A USP domain is found at 55–466; that stretch reads YGMENFGNTC…CAYVLFYQET (412 aa). Cys64 (nucleophile) is an active-site residue. Disordered regions lie at residues 115–145 and 243–266; these read EALAEKQKAANSPRPGQPPNPQQKPEDKDSP and ESPQPASDVSDSVIPSSSSGSRTP. A compositionally biased stretch (low complexity) spans 249 to 263; it reads SDVSDSVIPSSSSGS. His417 (proton acceptor) is an active-site residue. Residues 526–752 are disordered; that stretch reads APTAPQLSTH…HDRSSHGKWR (227 aa). Residues 548–572 are compositionally biased toward pro residues; sequence SPAPDPAPLTSLPPIPPIPETPPAP. Residues 573–620 are a coiled coil; sequence LTSRKSDLQSKKERVKEEKERKAAEKEKEKQRRKEIETRLKDRQRRED. Composition is skewed to basic and acidic residues over residues 576 to 643 and 734 to 747; these read RKSD…RNHA and EQEHIKNSKHDRSS.

The protein belongs to the peptidase C19 family. As to quaternary structure, interacts with creA, creC and qutD.

It carries out the reaction Thiol-dependent hydrolysis of ester, thioester, amide, peptide and isopeptide bonds formed by the C-terminal Gly of ubiquitin (a 76-residue protein attached to proteins as an intracellular targeting signal).. Ubiquitin thioesterase component of the regulatory network controlling carbon source utilization through ubiquitination and deubiquitination involving creA, creB, creC, creD and acrB. Deubiquitinates the creA catabolic repressor and the quinate permease qutD. Also plays a role in response to carbon starvation and the control of extracellular proteases activity. The protein is Ubiquitin carboxyl-terminal hydrolase creB (creB) of Emericella nidulans (strain FGSC A4 / ATCC 38163 / CBS 112.46 / NRRL 194 / M139) (Aspergillus nidulans).